A 543-amino-acid polypeptide reads, in one-letter code: Formate--tetrahydrofolate ligase (543 aa).

Residue 54-61 (TPAGEGKT) coordinates ATP.

It belongs to the formate--tetrahydrofolate ligase family.

The catalysed reaction is (6S)-5,6,7,8-tetrahydrofolate + formate + ATP = (6R)-10-formyltetrahydrofolate + ADP + phosphate. The protein operates within one-carbon metabolism; tetrahydrofolate interconversion. This is Formate--tetrahydrofolate ligase from Thermus thermophilus (strain ATCC BAA-163 / DSM 7039 / HB27).